The following is a 203-amino-acid chain: MDKAFDEIIGNSHTDSSSNHKVTRYRRRDLRNELGPRLGFAPSDAASRSKDRLYREREEPPLPKRIRISKIPLDVSDYTLDDMIKEFGSPIFSKIFDNKEDRTCIYEFEDPEVLEKIVERYNGHELHNAKIEVEIYQPQRKHSRMNAHNRRKQTAQEHGRDRPGSHYRQKPNRVSKKNKGREKNNTPTSVEALDAELDAYMKG.

Met1 is modified (N-acetylmethionine). Disordered stretches follow at residues 1 to 60 and 137 to 203; these read MDKA…REEP and QPQR…YMKG. Polar residues predominate over residues 11–20; the sequence is NSHTDSSSNH. Residues 47 to 60 are compositionally biased toward basic and acidic residues; it reads SRSKDRLYREREEP. The RRM domain occupies 64-138; sequence KRIRISKIPL…AKIEVEIYQP (75 aa). The span at 139–153 shows a compositional bias: basic residues; it reads QRKHSRMNAHNRRKQ. Residues 154–164 are compositionally biased toward basic and acidic residues; sequence TAQEHGRDRPG. Residues 165–180 show a composition bias toward basic residues; it reads SHYRQKPNRVSKKNKG.

This sequence belongs to the YRA1 family. Associates with mRNPs. Interacts with YRA1.

The protein resides in the nucleus. In terms of biological role, involved in export of poly(A) mRNAs from the nucleus. Recruited to the coding sequences as well as poly-A sites of active genes. The polypeptide is RNA annealing protein YRA2 (YRA2) (Saccharomyces cerevisiae (strain YJM789) (Baker's yeast)).